Here is a 394-residue protein sequence, read N- to C-terminus: Probable peptidoglycan glycosyltransferase FtsW (394 aa).

The Cytoplasmic portion of the chain corresponds to M1 to W26. A helical transmembrane segment spans residues L27–V47. At M48–P57 the chain is on the periplasmic side. Residues F58–V78 form a helical membrane-spanning segment. Over V79–K88 the chain is Cytoplasmic. Residues I89–I109 traverse the membrane as a helical segment. Residues G110–R118 lie on the Periplasmic side of the membrane. A helical transmembrane segment spans residues W119–F139. Topologically, residues Y140–E154 are cytoplasmic. Residues S155–L175 form a helical membrane-spanning segment. Residues E176–P177 lie on the Periplasmic side of the membrane. A helical transmembrane segment spans residues D178–V198. Residues K199 to R201 are Cytoplasmic-facing. Residues Y202 to P222 traverse the membrane as a helical segment. The Periplasmic portion of the chain corresponds to Y223–D278. The chain crosses the membrane as a helical span at residues F279–L299. The Cytoplasmic segment spans residues Y300–Y327. Residues G328 to L348 traverse the membrane as a helical segment. At P349–T354 the chain is on the periplasmic side. Residues L355–L375 traverse the membrane as a helical segment. At L376–A394 the chain is on the cytoplasmic side.

This sequence belongs to the SEDS family. FtsW subfamily.

It localises to the cell inner membrane. The catalysed reaction is [GlcNAc-(1-&gt;4)-Mur2Ac(oyl-L-Ala-gamma-D-Glu-L-Lys-D-Ala-D-Ala)](n)-di-trans,octa-cis-undecaprenyl diphosphate + beta-D-GlcNAc-(1-&gt;4)-Mur2Ac(oyl-L-Ala-gamma-D-Glu-L-Lys-D-Ala-D-Ala)-di-trans,octa-cis-undecaprenyl diphosphate = [GlcNAc-(1-&gt;4)-Mur2Ac(oyl-L-Ala-gamma-D-Glu-L-Lys-D-Ala-D-Ala)](n+1)-di-trans,octa-cis-undecaprenyl diphosphate + di-trans,octa-cis-undecaprenyl diphosphate + H(+). It participates in cell wall biogenesis; peptidoglycan biosynthesis. Its function is as follows. Peptidoglycan polymerase that is essential for cell division. In Legionella pneumophila subsp. pneumophila (strain Philadelphia 1 / ATCC 33152 / DSM 7513), this protein is Probable peptidoglycan glycosyltransferase FtsW.